The sequence spans 191 residues: Probable DNA-directed RNA polymerase subunit delta (191 aa).

The region spanning 14–83 (LSMIEVARAI…GENKWGLRSW (70 aa)) is the HTH HARE-type domain. The interval 118 to 191 (DEDAIDYRDD…EDEEDEEPVL (74 aa)) is disordered.

The protein belongs to the RpoE family. In terms of assembly, RNAP is composed of a core of 2 alpha, a beta and a beta' subunits. The core is associated with a delta subunit and one of several sigma factors.

Participates in both the initiation and recycling phases of transcription. In the presence of the delta subunit, RNAP displays an increased specificity of transcription, a decreased affinity for nucleic acids, and an increased efficiency of RNA synthesis because of enhanced recycling. This Streptococcus pyogenes serotype M18 (strain MGAS8232) protein is Probable DNA-directed RNA polymerase subunit delta.